Here is a 728-residue protein sequence, read N- to C-terminus: Catalase-peroxidase (728 aa).

The interval Met1–Asp26 is disordered. A cross-link (tryptophyl-tyrosyl-methioninium (Trp-Tyr) (with M-244)) is located at residues Trp96–Tyr218. His97 acts as the Proton acceptor in catalysis. The tryptophyl-tyrosyl-methioninium (Tyr-Met) (with W-96) cross-link spans Tyr218 to Met244. His259 contacts heme b.

The protein belongs to the peroxidase family. Peroxidase/catalase subfamily. Homodimer or homotetramer. It depends on heme b as a cofactor. Post-translationally, formation of the three residue Trp-Tyr-Met cross-link is important for the catalase, but not the peroxidase activity of the enzyme.

The enzyme catalyses H2O2 + AH2 = A + 2 H2O. It catalyses the reaction 2 H2O2 = O2 + 2 H2O. Its function is as follows. Bifunctional enzyme with both catalase and broad-spectrum peroxidase activity. The polypeptide is Catalase-peroxidase (Rhizobium etli (strain CIAT 652)).